A 207-amino-acid polypeptide reads, in one-letter code: Small ribosomal subunit protein uS3c (207 aa).

A KH type-2 domain is found at 39-109 (IRDYIFTNLL…QLKINIIDVT (71 aa)).

Belongs to the universal ribosomal protein uS3 family. Part of the 30S ribosomal subunit.

It localises to the plastid. The protein resides in the chloroplast. In Cyanidium caldarium (Red alga), this protein is Small ribosomal subunit protein uS3c (rps3).